The sequence spans 834 residues: WW domain-containing adapter protein with coiled-coil homolog (834 aa).

Disordered stretches follow at residues 1–247, 268–411, and 430–504; these read MVMH…WSEH, KPKE…SVAT, and VTGA…GAKG. Positions 22 to 31 are enriched in low complexity; sequence HTSYQSSKYS. A compositionally biased stretch (basic and acidic residues) spans 33 to 50; sequence SKRDYERDRSSNYRDRDL. Residues 53–77 show a composition bias toward gly residues; the sequence is GAGGGGGGGSAGGGGGGSGNGGGPL. Residues 96–108 are compositionally biased toward basic and acidic residues; that stretch reads RSHDLRDRSDHRG. Gly residues predominate over residues 109 to 119; it reads GGGGNGRGGSG. Composition is skewed to basic and acidic residues over residues 127 to 168, 181 to 246, and 268 to 303; these read KMRD…DRRG, SSRE…DWSE, and KPKE…DRFS. The region spanning 244–271 is the WW domain; sequence WSEHVSSSGKMYYYNCKTEISQWEKPKE. Polar residues-rich tracts occupy residues 304-314 and 350-363; these read RSTYKHSNSSR and GDST…YSLS. A compositionally biased stretch (gly residues) spans 369–384; the sequence is HGGGPGGGGPGGGGGS. Composition is skewed to low complexity over residues 402–411 and 431–466; these read TANSSASVAT and TGAT…LRNS. Residues 472–496 show a composition bias toward polar residues; the sequence is GSTSGTTVPTLGSQDPHQHHLNSNA.

As to expression, expressed in adult head and thorax and in larval central nervous system and fat body.

Its subcellular location is the nucleus. It localises to the lysosome. Its function is as follows. Acts as a linker between gene transcription and histone H2B monoubiquitination at 'Lys-118'. Regulates the cell-cycle checkpoint activation in response to DNA damage. Positive regulator of amino acid starvation-induced autophagy. Also acts as a negative regulator of basal autophagy. Positively regulates mTor activity. Promotes, in an energy-dependent manner, the assembly of the TTT complex and the RUVBL complex composed of pont and rept into the TTT-RUVBL complex. This leads to dimerization of the mTORC1 complex and its subsequent activation. May negatively regulate the ubiquitin proteasome pathway. Required for habituation, a form of non-associative learning. This Drosophila melanogaster (Fruit fly) protein is WW domain-containing adapter protein with coiled-coil homolog.